We begin with the raw amino-acid sequence, 113 residues long: U11-theraphotoxin-Hhn1a (113 aa).

Residues 1 to 21 (MNTVRVTFLLVFVLAVSLGQA) form the signal peptide. The propeptide occupies 22–74 (DKDENRMEMQEKTEQGNSYLDFAENLLLQKLEELEAKLLEEDSEESRNSRQKR). The span at 60-69 (LEEDSEESRN) shows a compositional bias: basic and acidic residues. Residues 60-83 (LEEDSEESRNSRQKRCIGEGVPCD) are disordered. 3 cysteine pairs are disulfide-bonded: cysteine 75-cysteine 90, cysteine 82-cysteine 95, and cysteine 89-cysteine 110.

This sequence belongs to the neurotoxin 14 (magi-1) family. 01 (HNTX-16) subfamily. As to expression, expressed by the venom gland.

Its subcellular location is the secreted. In terms of biological role, probable ion channel inhibitor. The chain is U11-theraphotoxin-Hhn1a from Cyriopagopus hainanus (Chinese bird spider).